The following is a 258-amino-acid chain: GTP cyclohydrolase FolE2 (258 aa).

Belongs to the GTP cyclohydrolase IV family.

It catalyses the reaction GTP + H2O = 7,8-dihydroneopterin 3'-triphosphate + formate + H(+). It participates in cofactor biosynthesis; 7,8-dihydroneopterin triphosphate biosynthesis; 7,8-dihydroneopterin triphosphate from GTP: step 1/1. In terms of biological role, converts GTP to 7,8-dihydroneopterin triphosphate. This Geobacter sulfurreducens (strain ATCC 51573 / DSM 12127 / PCA) protein is GTP cyclohydrolase FolE2.